The primary structure comprises 410 residues: 2-epi-5-epi-valiolone synthase (410 aa).

NAD(+) contacts are provided by residues Asp66, 97-100 (ETLK), 130-134 (GVLMD), 154-155 (TT), Lys167, Lys176, and 194-197 (FLAT). Residue Lys167 is part of the active site. 3 residues coordinate a divalent metal cation: Glu209, His280, and His296.

This sequence belongs to the sugar phosphate cyclases superfamily. EEVS family. NAD(+) serves as cofactor. Co(2+) is required as a cofactor.

The catalysed reaction is D-sedoheptulose 7-phosphate = 2-epi-5-epi-valiolone + phosphate. Catalyzes the cyclization of D-sedoheptulose 7-phosphate to 2-epi-5-epi-valiolone. Involved in salbostatin biosynthesis. The sequence is that of 2-epi-5-epi-valiolone synthase from Streptomyces albus (strain ATCC 21838 / DSM 41398 / FERM P-419 / JCM 4703 / NBRC 107858).